Consider the following 167-residue polypeptide: MALEGEDVRDYNLTEEQKAIKAKYPPVSRKYEYLDHTADVQLHAWGDTLEEAFEQCAMAMFGYMTDTGTVEPLQTIEVETQGDDLQSLLFHFLDEWLYKFSADEFFIPREVKVLNIDQRNFKIRSIGWGEEFSLSKHPQGTEVKAITYSAMQVYNEEKPEVFVIIDI.

Residue A2 is modified to N-acetylalanine. Ca(2+)-binding residues include D39, D166, and I167.

It belongs to the archease family. As to quaternary structure, component of the tRNA-splicing ligase complex.

Functionally, component of the tRNA-splicing ligase complex required to facilitate the enzymatic turnover of catalytic subunit RTCB. Together with DDX1, acts by facilitating the guanylylation of RTCB, a key intermediate step in tRNA ligation. This Bos taurus (Bovine) protein is Protein archease (ZBTB8OS).